Reading from the N-terminus, the 341-residue chain is Alpha-ketoglutarate-dependent dioxygenase oryG (341 aa).

Residue H100 coordinates substrate. Fe cation-binding residues include H140 and D142. 2-oxoglutarate is bound at residue T167. H299 is a binding site for Fe cation. 2 residues coordinate 2-oxoglutarate: R311 and R315. Substrate is bound at residue R315.

The protein belongs to the TfdA dioxygenase family. Fe(2+) is required as a cofactor.

It functions in the pathway secondary metabolite biosynthesis. Functionally, alpha-ketoglutarate-dependent dioxygenase; part of the gene cluster that mediates the biosynthesis of oryzines, natural products with an unusual maleidride backbone. The two subunits of the fungal fatty acid synthase oryfasA and oryfasB probably form octenoic acid. This fatty acid is most likely activated by the acyl-CoA ligase oryP to give octenyl-CoA before the citrate synthase-like protein oryE catalyzes condensation with oxaloacetate to form tricarboxylic acid. The next steps of the pathways are conjectural, but a favorite possible route has been proposed, beginning with decarboxylation and concomitant dehydration by the decarboxylase oryM, followed by tautomerization, which may lead to the production of a diene intermediate. Reduction of this diene intermediate could give the known metabolite piliformic acid. On the pathway to oryzine B and oryzine A, however, hydroxylation of the diene by the alpha-ketoglutarate-dependent dioxygenase oryG and lactonisation by the lactonohydrolases oryH or oryL could give oryzine B directly. Finally, enoyl reduction by the dehydrogenase oryD would then convert oryzine B into oryzine A. This chain is Alpha-ketoglutarate-dependent dioxygenase oryG, found in Aspergillus oryzae (strain ATCC 42149 / RIB 40) (Yellow koji mold).